We begin with the raw amino-acid sequence, 234 residues long: Eukaryotic translation initiation factor 3 subunit K (234 aa).

The region spanning 46–219 is the PCI domain; sequence SDIEANLALL…EAKPATTTES (174 aa).

This sequence belongs to the eIF-3 subunit K family. Component of the eukaryotic translation initiation factor 3 (eIF-3) complex.

Its subcellular location is the cytoplasm. Its function is as follows. Component of the eukaryotic translation initiation factor 3 (eIF-3) complex, which is involved in protein synthesis of a specialized repertoire of mRNAs and, together with other initiation factors, stimulates binding of mRNA and methionyl-tRNAi to the 40S ribosome. The eIF-3 complex specifically targets and initiates translation of a subset of mRNAs involved in cell proliferation. This is Eukaryotic translation initiation factor 3 subunit K from Yarrowia lipolytica (strain CLIB 122 / E 150) (Yeast).